The following is a 193-amino-acid chain: Probable chemoreceptor glutamine deamidase CheD 1 (193 aa).

A disordered region spans residues 1-26 (MPHTPPAYPAASADHRPPSSPPAEPA).

This sequence belongs to the CheD family.

The catalysed reaction is L-glutaminyl-[protein] + H2O = L-glutamyl-[protein] + NH4(+). Functionally, probably deamidates glutamine residues to glutamate on methyl-accepting chemotaxis receptors (MCPs), playing an important role in chemotaxis. This Chromobacterium violaceum (strain ATCC 12472 / DSM 30191 / JCM 1249 / CCUG 213 / NBRC 12614 / NCIMB 9131 / NCTC 9757 / MK) protein is Probable chemoreceptor glutamine deamidase CheD 1.